Here is a 389-residue protein sequence, read N- to C-terminus: Trans-2-enoyl-CoA reductase [NADH] (389 aa).

NAD(+) is bound by residues 47-52, 73-74, 110-111, and 138-139; these read GASTGY, FE, DA, and LA. Tyrosine 224 contacts substrate. Tyrosine 234 (proton donor) is an active-site residue. Residues lysine 243 and 272 to 274 each bind NAD(+); that span reads LVT.

The protein belongs to the TER reductase family. As to quaternary structure, monomer.

The catalysed reaction is a 2,3-saturated acyl-CoA + NAD(+) = a (2E)-enoyl-CoA + NADH + H(+). It participates in lipid metabolism; fatty acid biosynthesis. Involved in the fatty acid synthesis (FAS II). Catalyzes the reduction of a carbon-carbon double bond in an enoyl moiety that is covalently linked to a coenzyme A (CoA). The sequence is that of Trans-2-enoyl-CoA reductase [NADH] from Clostridium perfringens (strain 13 / Type A).